Consider the following 271-residue polypeptide: Phosphatidylinositol transfer protein beta isoform (271 aa).

K215 is modified (N6-acetyllysine). S262 carries the phosphoserine modification.

This sequence belongs to the PtdIns transfer protein family. PI transfer class I subfamily. Post-translationally, constitutive phosphorylation of Ser-262 has no effect on phospholipid transfer activity but is required for Golgi targeting. In terms of tissue distribution, widely expressed in various tissues including brain.

Its subcellular location is the golgi apparatus. The protein localises to the golgi apparatus membrane. It localises to the endoplasmic reticulum membrane. The catalysed reaction is a 1,2-diacyl-sn-glycero-3-phosphocholine(in) = a 1,2-diacyl-sn-glycero-3-phosphocholine(out). The enzyme catalyses a 1,2-diacyl-sn-glycero-3-phospho-(1D-myo-inositol)(in) = a 1,2-diacyl-sn-glycero-3-phospho-(1D-myo-inositol)(out). It carries out the reaction an N-(acyl)-sphingosylphosphocholine(in) = an N-(acyl)-sphingosylphosphocholine(out). With respect to regulation, phosphatidylinositol transfer activity is inhibited by N-ethylmaleimide. Its function is as follows. Catalyzes the transfer of phosphatidylinositol and phosphatidylcholine between membranes. Also catalyzes the transfer of sphingomyelin. Required for COPI-mediated retrograde transport from the Golgi to the endoplasmic reticulum; phosphatidylinositol and phosphatidylcholine transfer activity is essential for this function. The chain is Phosphatidylinositol transfer protein beta isoform (PITPNB) from Homo sapiens (Human).